Here is a 100-residue protein sequence, read N- to C-terminus: NADH-quinone oxidoreductase subunit K 1 (100 aa).

3 helical membrane passes run 4–24, 29–49, and 60–80; these read LNNYLIISAILFSIGTIGVLV, IVIFMCVEMMLNAVNLTFIAF, and IFVFFVMTVAAAEAAVGLALM.

Belongs to the complex I subunit 4L family. In terms of assembly, NDH-1 is composed of 14 different subunits. Subunits NuoA, H, J, K, L, M, N constitute the membrane sector of the complex.

The protein localises to the cell inner membrane. It carries out the reaction a quinone + NADH + 5 H(+)(in) = a quinol + NAD(+) + 4 H(+)(out). NDH-1 shuttles electrons from NADH, via FMN and iron-sulfur (Fe-S) centers, to quinones in the respiratory chain. The immediate electron acceptor for the enzyme in this species is believed to be ubiquinone. Couples the redox reaction to proton translocation (for every two electrons transferred, four hydrogen ions are translocated across the cytoplasmic membrane), and thus conserves the redox energy in a proton gradient. This chain is NADH-quinone oxidoreductase subunit K 1, found in Geotalea daltonii (strain DSM 22248 / JCM 15807 / FRC-32) (Geobacter daltonii).